The sequence spans 192 residues: Peptidyl-tRNA hydrolase (192 aa).

Residue Y18 coordinates tRNA. The active-site Proton acceptor is H23. Residues F69, N71, and N117 each contribute to the tRNA site.

It belongs to the PTH family. As to quaternary structure, monomer.

The protein resides in the cytoplasm. The catalysed reaction is an N-acyl-L-alpha-aminoacyl-tRNA + H2O = an N-acyl-L-amino acid + a tRNA + H(+). Functionally, hydrolyzes ribosome-free peptidyl-tRNAs (with 1 or more amino acids incorporated), which drop off the ribosome during protein synthesis, or as a result of ribosome stalling. Catalyzes the release of premature peptidyl moieties from peptidyl-tRNA molecules trapped in stalled 50S ribosomal subunits, and thus maintains levels of free tRNAs and 50S ribosomes. This chain is Peptidyl-tRNA hydrolase, found in Neisseria meningitidis serogroup A / serotype 4A (strain DSM 15465 / Z2491).